Reading from the N-terminus, the 436-residue chain is MTSVPIFESVSRFLPPANEDEKFWWKVTGRHMARMMHEAGYPEDRQVECLLFHRFKVVPCLGPRPHSDTPWYKSRVGGGAADGCPINYSWRFGTADRRPHIRNFIEPLGALTNTSADPLNEVATKALLHDYSMTLPNVDLEAFWTFAPHYRPRIIEKADMEKLAGASLLVGAEMSPDSHTIDIKAYMYPRVPSQTSQLLTTILPQAMRDAYGEDVCLDSLNFVHDFMTKDPQGCQLVLTGTTGIDCCKLQDTRVKIYVITRNTSFDHIAAIVTLGGRRPISEELLGQLKALWYELKGAPAELPSSEQLPVQTKPDGSKNPIVVPFYFDIQPRLALPDVKAYIDVSTSPVSDLAAANAVVCHLEQHGSGQNPRAYLNVLKDITPVEELETQKGALAFYSVAVKKNELDITSYFNPQVYKRYFAHEVQLNGQRRSVFE.

This sequence belongs to the tryptophan dimethylallyltransferase family.

Its pathway is secondary metabolite biosynthesis. Functionally, prenyltransferase; part of the gene cluster that mediates the biosynthesis of neosartoricin B, a prenylated anthracenone that probably exhibits T-cell antiproliferative activity, suggestive of a physiological role as an immunosuppressive agent. The non-reducing polyketide synthase nscA probably synthesizes and cyclizes the decaketide backbone. The hydrolase nscB then mediates the product release through hydrolysis followed by spontaneous decarboxylation. The prenyltransferase nscD catalyzes the addition of the dimethylallyl group to the aromatic C5. The FAD-dependent monooxygenase nscC is then responsible for the stereospecific hydroxylation at C2. Neosartoricin B can be converted into two additional compounds neosartoricins C and D. Neosartoricin C is a spirocyclic compound that is cyclized through the attack of C3 hydroxyl on C14, followed by dehydration. On the other hand, neosartoricin D is a further cyclized compound in which attack of C2 on C14 in neosartoricin C results in the formation of the acetal-containing dioxabicyclo-octanone ring. Both of these compounds are novel and possibly represent related metabolites of the gene cluster. The chain is Prenyltransferase nscD from Arthroderma benhamiae (strain ATCC MYA-4681 / CBS 112371) (Trichophyton mentagrophytes).